Reading from the N-terminus, the 250-residue chain is Oil body-associated protein 2B (250 aa).

The segment at methionine 1 to valine 29 is disordered. Residues proline 8–alanine 18 are compositionally biased toward low complexity.

It belongs to the OBAP family.

This chain is Oil body-associated protein 2B, found in Zea mays (Maize).